A 933-amino-acid chain; its full sequence is Bromodomain testis-specific protein (933 aa).

Positions 1–21 (MSMSSRHLHSSIVNPPPPEYI) are disordered. The 107-residue stretch at 28-134 (RLTNQLQYLE…KVFMEKIAEM (107 aa)) folds into the Bromo 1 domain. A Nuclear localization signal motif is present at residues 214-225 (KGIKRKADTTTP). Residues 235–263 (ESSPTLSEPKPNKILSGTEKTRSAETSAV) form a disordered region. The Bromo 2 domain maps to 278-385 (NQICEQLKHC…DVFEGMFAKI (108 aa)). Disordered stretches follow at residues 398 to 425 (RYKTSTEESSSSSSSEQSSSSDSEDERA), 576 to 610 (KPSSIKSLKSKEQLNKEKKQELEKRLRDVSGQLSS), and 627 to 662 (GGPSRLSESSTSSSASDVSNSSDSSSSDSSDSESAT). Low complexity predominate over residues 404-418 (EESSSSSSSEQSSSS). Residues 423–448 (ERAQHLALLQEQLRAVQEQLKALTET) are a coiled coil. Residues 495-577 (VSDEEEDVKP…VCLRKRPKKP (83 aa)) enclose the NET domain. Residues 584 to 603 (KSKEQLNKEKKQELEKRLRD) show a composition bias toward basic and acidic residues. Residues 630–660 (SRLSESSTSSSASDVSNSSDSSSSDSSDSES) are compositionally biased toward low complexity. Positions 829 to 917 (AKEERERALK…RREAMAGTID (89 aa)) form a coiled coil.

This sequence belongs to the BET family.

The protein resides in the nucleus. Functionally, testis-specific chromatin protein that specifically binds histone H4 acetylated at 'Lys-5' and 'Lys-8' (H4K5ac and H4K8ac, respectively) and plays a key role in spermatogenesis. Required in late pachytene spermatocytes: plays a role in meiotic and post-meiotic cells by binding to acetylated histones at the promoter of specific meiotic and post-meiotic genes, facilitating their activation at the appropriate time. In the post-meiotic phase of spermatogenesis, binds to hyperacetylated histones and participates in their general removal from DNA. Also recognizes and binds a subset of butyrylated histones: able to bind histone H4 butyrylated at 'Lys-8' (H4K8ac), while it is not able to bind H4 butyrylated at 'Lys-5' (H4K5ac). The sequence is that of Bromodomain testis-specific protein (brdt) from Xenopus tropicalis (Western clawed frog).